Reading from the N-terminus, the 316-residue chain is L-lactate dehydrogenase (316 aa).

34-39 (DVVEGV) is an NAD(+) binding site. Positions 89, 121, and 152 each coordinate substrate. Asn121 contacts NAD(+). His172 functions as the Proton acceptor in the catalytic mechanism.

This sequence belongs to the LDH/MDH superfamily. LDH family. As to quaternary structure, homotetramer.

It catalyses the reaction (S)-lactate + NAD(+) = pyruvate + NADH + H(+). The protein operates within fermentation; pyruvate fermentation to lactate; (S)-lactate from pyruvate: step 1/1. This is L-lactate dehydrogenase from Botryococcus braunii (Green alga).